The chain runs to 248 residues: MMVNSLKKRIQRSFNKAFDTYDDHASIQREICKQLLKPLKEMRIQTKIIADFACGTGISTKAVADSFPYQNLYAIDFCEKLLIQAKSKLKESNVEFILADFETNVFLCNSLDLIFCNMGFQWALDLKQTFFSLFSQLKAFGVLAFSVPLLGTFCELRNDCRNPFLTLQSIVQLLKAVGFELLTADEKIFTDSFESPLDAIRSIKSIGANCLLYPKRNKGLSPMPIEKNNTDTTLTYHIGFFIAKKIIQ.

It belongs to the methyltransferase superfamily.

The enzyme catalyses malonyl-[ACP] + S-adenosyl-L-methionine = malonyl-[ACP] methyl ester + S-adenosyl-L-homocysteine. It participates in cofactor biosynthesis; biotin biosynthesis. Functionally, converts the free carboxyl group of a malonyl-thioester to its methyl ester by transfer of a methyl group from S-adenosyl-L-methionine (SAM). It allows to synthesize pimeloyl-ACP via the fatty acid synthetic pathway. The chain is Malonyl-[acyl-carrier protein] O-methyltransferase 2 from Coxiella burnetii (strain RSA 493 / Nine Mile phase I).